We begin with the raw amino-acid sequence, 601 residues long: Elongation factor 4 (601 aa).

A tr-type G domain is found at 5–187 (ENIRNFCIIA…AIVHHLPAPK (183 aa)). GTP is bound by residues 17 to 22 (DHGKST) and 134 to 137 (NKID).

This sequence belongs to the TRAFAC class translation factor GTPase superfamily. Classic translation factor GTPase family. LepA subfamily.

It localises to the cell inner membrane. It catalyses the reaction GTP + H2O = GDP + phosphate + H(+). Functionally, required for accurate and efficient protein synthesis under certain stress conditions. May act as a fidelity factor of the translation reaction, by catalyzing a one-codon backward translocation of tRNAs on improperly translocated ribosomes. Back-translocation proceeds from a post-translocation (POST) complex to a pre-translocation (PRE) complex, thus giving elongation factor G a second chance to translocate the tRNAs correctly. Binds to ribosomes in a GTP-dependent manner. The chain is Elongation factor 4 from Desulfovibrio desulfuricans (strain ATCC 27774 / DSM 6949 / MB).